Reading from the N-terminus, the 540-residue chain is Phosphoenolpyruvate carboxykinase (ATP) (540 aa).

Residue Arg-65 coordinates substrate. Residue Lys-87 is modified to N6-acetyllysine. Residues Tyr-207 and Lys-213 each coordinate substrate. Residues Lys-213, His-232, and 248 to 256 (GLSGTGKTT) each bind ATP. Positions 213 and 232 each coordinate Mn(2+). Asp-269 provides a ligand contact to Mn(2+). Residues Glu-297, Arg-333, 449 to 450 (RI), and Thr-455 contribute to the ATP site. Arg-333 serves as a coordination point for substrate. Lys-523 is subject to N6-acetyllysine.

Belongs to the phosphoenolpyruvate carboxykinase (ATP) family. Monomer. The cofactor is Mn(2+).

It is found in the cytoplasm. The catalysed reaction is oxaloacetate + ATP = phosphoenolpyruvate + ADP + CO2. The protein operates within carbohydrate biosynthesis; gluconeogenesis. In terms of biological role, involved in the gluconeogenesis. Catalyzes the conversion of oxaloacetate (OAA) to phosphoenolpyruvate (PEP) through direct phosphoryl transfer between the nucleoside triphosphate and OAA. This is Phosphoenolpyruvate carboxykinase (ATP) from Shigella flexneri.